We begin with the raw amino-acid sequence, 141 residues long: VLSSGDKANVKSVWSKVQGHLEDYGAETLDRMFTVFPQTKTYFSHFDVHHGSTQIRSHGKKVMLALGDAVNHIDDIATALSALSDKHAHILRVDPVNFKLLSHCLLVVVARHHPTLFTPDVHVSLDKFMGTVSTVLTSKYR.

Positions 1-141 constitute a Globin domain; the sequence is VLSSGDKANV…VSTVLTSKYR (141 aa). His-58 is a binding site for O2. His-87 contacts heme b.

The protein belongs to the globin family. In terms of assembly, heterotetramer of two alpha chains and two beta chains. In terms of tissue distribution, red blood cells.

Involved in oxygen transport from the lung to the various peripheral tissues. The polypeptide is Hemoglobin subunit alpha-A (HBAA) (Caretta caretta (Loggerhead sea turtle)).